The chain runs to 537 residues: MLGRPVFGLGKAITSVDVAVIDANSEWIGVKRLQLMENAGRSVAEEAAKLAKPGSRVVVFAGPGGNGGDGLVAARHLAYMGYQVTVVMIVKPEEIRSPETRAMYEALAAMDLTVDIRIARAPADVAPVEADVVIDALLGTGLRGAPRPPYSDAIEAVNSSTGLKLAVDVPSGLNSDTGETPGAYVKADITVTFHKPKPGLLRRPDVAGRLVVVSIGAPPEAEVYVGPGDVAYRVRPRSWKAHKGSSGRVLIVGGSQDYVGAPILAALAAERSGVDLVFLAAPEHVTRAASHHPTIIPVPLRGSPNIHPDHVKKLEQLLDRVDAIAIGMGVGLSDETKEAIPQIIVKALEKEKPVVVDADGIKILGERGIPNSNRKLVVTPHQREFQILFGDALSGVDEDIKARALKAAEKAQRHGLVILLKGPIDIVTDGERIRLNRTGVPAMSVGGTGDTLAGITAALLARKLEPFHAASIAAFVNGLAGALAYAEKKDSMTAMDLIEKIPEALNNPIEAANRVPAYQRLVRGRIEWQPPVGRSES.

An NAD(P)H-hydrate epimerase region spans residues 1-227; it reads MLGRPVFGLG…PPEAEVYVGP (227 aa). The YjeF N-terminal domain maps to 13–223; that stretch reads ITSVDVAVID…SIGAPPEAEV (211 aa). The tract at residues 65–69 is NADPHX 1; for epimerase activity; it reads GNGGD. K(+) is bound by residues Asn-66 and Asp-135. The segment at 139 to 145 is NADPHX 1; for epimerase activity; that stretch reads GTGLRGA. (6S)-NADPHX-binding residues include Tyr-150 and Asp-168. Ser-171 is a K(+) binding site. The YjeF C-terminal domain occupies 226–508; the sequence is GPGDVAYRVR…EKIPEALNNP (283 aa). Positions 227 to 537 are ADP-dependent (S)-NAD(P)H-hydrate dehydratase; the sequence is PGDVAYRVRP…WQPPVGRSES (311 aa). Gly-329 contributes to the (6S)-NADPHX binding site. An NADPHX 2; for dehydratase activity region spans residues 381–387; it reads HQREFQI. Residues 421–425 and 440–449 each bind ADP; these read KGPID and VPAMSVGGTG. A (6S)-NADPHX-binding site is contributed by Asp-450.

This sequence in the N-terminal section; belongs to the NnrE/AIBP family. In the C-terminal section; belongs to the NnrD/CARKD family. The cofactor is K(+).

It carries out the reaction (6S)-NADHX + ADP = AMP + phosphate + NADH + H(+). The catalysed reaction is (6S)-NADPHX + ADP = AMP + phosphate + NADPH + H(+). The enzyme catalyses (6R)-NADHX = (6S)-NADHX. It catalyses the reaction (6R)-NADPHX = (6S)-NADPHX. In terms of biological role, bifunctional enzyme that catalyzes the epimerization of the S- and R-forms of NAD(P)HX and the dehydration of the S-form of NAD(P)HX at the expense of ADP, which is converted to AMP. This allows the repair of both epimers of NAD(P)HX, a damaged form of NAD(P)H that is a result of enzymatic or heat-dependent hydration. This Hyperthermus butylicus (strain DSM 5456 / JCM 9403 / PLM1-5) protein is Bifunctional NAD(P)H-hydrate repair enzyme Nnr (nnr).